The primary structure comprises 755 residues: Dolichyl-phosphate-mannose--protein mannosyltransferase 4 (755 aa).

The disordered stretch occupies residues 1 to 23 (MSQTLKKRGGNSSGRKSPTTSNI). An N-linked (GlcNAc...) asparagine glycan is attached at N11. Residues 13 to 23 (SGRKSPTTSNI) show a composition bias toward polar residues. A run of 6 helical transmembrane segments spans residues 92-112 (FFDL…WLIG), 147-167 (IVPI…ACLF), 185-205 (ILLD…YSKF), 212-232 (SFSS…SCVI), 237-257 (VGVF…WILL), and 278-298 (ALII…FAIL). MIR domains lie at 325–389 (SKPV…IVPT), 396–454 (GTKV…LRLH), and 466–523 (KKEI…FDLI). N-linked (GlcNAc...) asparagine glycosylation occurs at N445. The next 3 helical transmembrane spans lie at 595–615 (IFFI…SIYI), 640–660 (LYNT…PFFL), and 670–690 (YLPA…FICS). A glycan (N-linked (GlcNAc...) asparagine) is linked at N691. A helical membrane pass occupies residues 706–726 (YKIIAVVAACSTAIIWFFFYF).

It belongs to the glycosyltransferase 39 family. Forms a functional homodimer.

It is found in the endoplasmic reticulum membrane. The enzyme catalyses a di-trans,poly-cis-dolichyl beta-D-mannosyl phosphate + L-seryl-[protein] = 3-O-(alpha-D-mannosyl)-L-seryl-[protein] + a di-trans,poly-cis-dolichyl phosphate + H(+). It carries out the reaction a di-trans,poly-cis-dolichyl beta-D-mannosyl phosphate + L-threonyl-[protein] = 3-O-(alpha-D-mannosyl)-L-threonyl-[protein] + a di-trans,poly-cis-dolichyl phosphate + H(+). It participates in protein modification; protein glycosylation. Protein mannosyltransferase (PMT) involved in hyphal growth and drug sensitivity. Transfers mannose from Dol-P-mannose to Ser or Thr residues on proteins. PMT1, PMT2 and PMT4 account for most of the protein-O-glycosylation activity, while PMT5 and PMT6 may specifically modulate a much narrower spectrum of target proteins. Accounts for the O-glycosylation of AXL2, responsible for bud site selection, as well as of the SEC20 t-SNARE component. O-glycosylation of SEC20 is essential for its stability. Required for biofilm formation. In Candida albicans (strain SC5314 / ATCC MYA-2876) (Yeast), this protein is Dolichyl-phosphate-mannose--protein mannosyltransferase 4.